The following is a 561-amino-acid chain: MRLWKSMAWGILLWHSQSGALCPAWPPARAAEEIARLQQQLADWNDIYWKQGVSAVDDSVYDQLSARLVQWQRCVGQDVSSTPVSPPLNGTTMHPVAHTGVRKLADRQAVEQWMRGRSELWVQPKVDGVAVTLVYQNGKLARAISRGNGLQGEDWTPKIRLIPSIPQTTQGALANAVLQGEIFLQREGHIQQRMGGMNARSKVAGMLMRQDNASALNSLGIFIWAWPDGPANMPERLSQLAKAGFSLTKKYTLAVKDASEVERARQSWLTSALPFVTDGVVIRMAKEPAAQYWRPGQGDWLAAWKYPPVAQVAQVSAIQFSVGKSGKITVVASLVPVILDDKRVQRVNIGSVKRWEAWDIAPGDQILVSLAGQGIPRLDEVVWRSRERSKPVPPDSHFNSLTCFYASATCQEQFISRLVWLGSRSALGLDGMGEASWRALHQTHRFEHIFSWLALTSAQIANTPGFAKGKSEQIWRQFNLARRQSFTRWIMAMDIPLTQAALQASGDRSWEQLLMRTEQHWRQLPATGERRAGRVIDWRDNPQIKALSRWLSAQHIPGFGS.

K125 functions as the N6-AMP-lysine intermediate in the catalytic mechanism.

The protein belongs to the NAD-dependent DNA ligase family. LigB subfamily.

The enzyme catalyses NAD(+) + (deoxyribonucleotide)n-3'-hydroxyl + 5'-phospho-(deoxyribonucleotide)m = (deoxyribonucleotide)n+m + AMP + beta-nicotinamide D-nucleotide.. Its function is as follows. Catalyzes the formation of phosphodiester linkages between 5'-phosphoryl and 3'-hydroxyl groups in double-stranded DNA using NAD as a coenzyme and as the energy source for the reaction. The protein is DNA ligase B of Salmonella schwarzengrund (strain CVM19633).